Reading from the N-terminus, the 552-residue chain is 4-coumarate--CoA ligase-like 4 (552 aa).

The segment at 182–205 is disordered; it reads ISATTPDPARRKDRVTQDDPATLL. A compositionally biased stretch (basic and acidic residues) spans 189–198; sequence PARRKDRVTQ. ATP-binding residues include Ser-207, Ser-208, Gly-209, Thr-210, Thr-211, and Lys-215. Tyr-256 lines the (E)-4-coumaroyl-AMP pocket. Residue Lys-277 coordinates CoA. The SBD1 stretch occupies residues 279–346; the sequence is ELPEMLRSIN…EKYPQVEILQ (68 aa). Residues Gly-324, Gln-346, Gly-347, and Thr-351 each coordinate (E)-4-coumaroyl-AMP. ATP is bound by residues Gln-346, Gly-347, Thr-351, Asp-432, and Arg-447. The interval 347–411 is SBD2; that stretch reads GYGLTESTAI…IRGPYVMKGY (65 aa). Positions 449 and 453 each coordinate (E)-4-coumaroyl-AMP. CoA-binding residues include Lys-455 and Gly-456. Lys-538 provides a ligand contact to ATP.

The protein belongs to the ATP-dependent AMP-binding enzyme family. Mg(2+) is required as a cofactor.

It carries out the reaction (E)-4-coumarate + ATP + CoA = (E)-4-coumaroyl-CoA + AMP + diphosphate. It catalyses the reaction (E)-4-coumarate + ATP + H(+) = (E)-4-coumaroyl-AMP + diphosphate. The catalysed reaction is (E)-4-coumaroyl-AMP + CoA = (E)-4-coumaroyl-CoA + AMP + H(+). Carboxylate--CoA ligase that may use 4-coumarate as substrate. Follows a two-step reaction mechanism, wherein the carboxylate substrate first undergoes adenylation by ATP, followed by a thioesterification in the presence of CoA to yield the final CoA thioester. The polypeptide is 4-coumarate--CoA ligase-like 4 (4CLL4) (Oryza sativa subsp. japonica (Rice)).